We begin with the raw amino-acid sequence, 416 residues long: ATP-dependent Clp protease ATP-binding subunit ClpX (416 aa).

Positions 1–54 constitute a ClpX-type ZB domain; sequence MFKFGDEKGQLKCSFCGKSQEQVRKLVAGPGVYICDECIELCNEIIEEELNDDV. 4 residues coordinate Zn(2+): Cys13, Cys16, Cys35, and Cys38. 117 to 124 contributes to the ATP binding site; it reads PTGCGKTL.

It belongs to the ClpX chaperone family. As to quaternary structure, component of the ClpX-ClpP complex. Forms a hexameric ring that, in the presence of ATP, binds to fourteen ClpP subunits assembled into a disk-like structure with a central cavity, resembling the structure of eukaryotic proteasomes.

ATP-dependent specificity component of the Clp protease. It directs the protease to specific substrates. Can perform chaperone functions in the absence of ClpP. This Halothermothrix orenii (strain H 168 / OCM 544 / DSM 9562) protein is ATP-dependent Clp protease ATP-binding subunit ClpX.